The primary structure comprises 239 residues: Probable transcriptional regulatory protein BAA_0622 (239 aa).

Belongs to the TACO1 family. YeeN subfamily.

It is found in the cytoplasm. In Bacillus anthracis (strain A0248), this protein is Probable transcriptional regulatory protein BAA_0622.